The primary structure comprises 23 residues: Fimbrial protein (23 aa).

Cys-8 and Cys-21 form a disulfide bridge.

It belongs to the N-Me-Phe pilin family. In terms of assembly, the pili are polar flexible filaments of about 5.4 nanometers diameter and 2.5 micrometers average length; they consist of only a single polypeptide chain arranged in a helical configuration of five subunits per turn in the assembled pilus.

It localises to the fimbrium. In Pseudomonas aeruginosa, this protein is Fimbrial protein (pil).